The chain runs to 101 residues: Small ribosomal subunit protein uS14 (101 aa).

The tract at residues 1–20 is disordered; the sequence is MAKTSAVEKNKRRRKLVANH. The segment covering 10 to 20 has biased composition (basic residues); it reads NKRRRKLVANH.

Belongs to the universal ribosomal protein uS14 family. Part of the 30S ribosomal subunit. Contacts proteins S3 and S10.

Functionally, binds 16S rRNA, required for the assembly of 30S particles and may also be responsible for determining the conformation of the 16S rRNA at the A site. This is Small ribosomal subunit protein uS14 from Sinorhizobium medicae (strain WSM419) (Ensifer medicae).